The sequence spans 453 residues: Ribulose bisphosphate carboxylase large chain (453 aa).

Positions 1–2 are excised as a propeptide; that stretch reads MS. At proline 3 the chain carries N-acetylproline. Lysine 14 bears the N6,N6,N6-trimethyllysine mark. Asparagine 123 and threonine 173 together coordinate substrate. The active-site Proton acceptor is the lysine 175. Lysine 177 contacts substrate. Residues lysine 201, aspartate 203, and glutamate 204 each coordinate Mg(2+). Position 201 is an N6-carboxylysine (lysine 201). Catalysis depends on histidine 294, which acts as the Proton acceptor. Arginine 295, histidine 327, and serine 379 together coordinate substrate.

The protein belongs to the RuBisCO large chain family. Type I subfamily. As to quaternary structure, heterohexadecamer of 8 large chains and 8 small chains; disulfide-linked. The disulfide link is formed within the large subunit homodimers. Mg(2+) is required as a cofactor. The disulfide bond which can form in the large chain dimeric partners within the hexadecamer appears to be associated with oxidative stress and protein turnover.

The protein localises to the plastid. It is found in the chloroplast. The enzyme catalyses 2 (2R)-3-phosphoglycerate + 2 H(+) = D-ribulose 1,5-bisphosphate + CO2 + H2O. It catalyses the reaction D-ribulose 1,5-bisphosphate + O2 = 2-phosphoglycolate + (2R)-3-phosphoglycerate + 2 H(+). Its function is as follows. RuBisCO catalyzes two reactions: the carboxylation of D-ribulose 1,5-bisphosphate, the primary event in carbon dioxide fixation, as well as the oxidative fragmentation of the pentose substrate in the photorespiration process. Both reactions occur simultaneously and in competition at the same active site. The chain is Ribulose bisphosphate carboxylase large chain from Galium parisiense (Wall bedstraw).